Here is a 527-residue protein sequence, read N- to C-terminus: Pyruvate kinase 1, cytosolic (527 aa).

Arg-58 serves as a coordination point for substrate. Residues Asp-60, Ser-62, Asp-92, and Thr-93 each contribute to the K(+) site. Residue 60–63 participates in ATP binding; sequence DFSW. A substrate-binding site is contributed by Lys-256. Residue Glu-258 coordinates Mg(2+). Positions 281, 282, and 313 each coordinate substrate. Position 282 (Asn-282) interacts with Mg(2+).

This sequence belongs to the pyruvate kinase family. In terms of assembly, homotetramer. Mg(2+) is required as a cofactor. K(+) serves as cofactor.

It localises to the cytoplasm. It is found in the cytosol. The catalysed reaction is pyruvate + ATP = phosphoenolpyruvate + ADP + H(+). It functions in the pathway carbohydrate degradation; glycolysis; pyruvate from D-glyceraldehyde 3-phosphate: step 5/5. Key regulatory enzyme of the glycolytic pathway that catalyzes the final step of glycolysis, converting ADP and phosphoenolpyruvate (PEP) to ATP and pyruvate by essentially irreversible transphosphorylation. Is critical for plant growth and development. The protein is Pyruvate kinase 1, cytosolic of Oryza sativa subsp. indica (Rice).